We begin with the raw amino-acid sequence, 429 residues long: 3-isopropylmalate dehydratase large subunit (429 aa).

Positions 303, 363, and 366 each coordinate [4Fe-4S] cluster.

Belongs to the aconitase/IPM isomerase family. LeuC type 2 subfamily. As to quaternary structure, heterodimer of LeuC and LeuD. The cofactor is [4Fe-4S] cluster.

The catalysed reaction is (2R,3S)-3-isopropylmalate = (2S)-2-isopropylmalate. Its pathway is amino-acid biosynthesis; L-leucine biosynthesis; L-leucine from 3-methyl-2-oxobutanoate: step 2/4. Functionally, catalyzes the isomerization between 2-isopropylmalate and 3-isopropylmalate, via the formation of 2-isopropylmaleate. In Caldicellulosiruptor bescii (strain ATCC BAA-1888 / DSM 6725 / KCTC 15123 / Z-1320) (Anaerocellum thermophilum), this protein is 3-isopropylmalate dehydratase large subunit.